We begin with the raw amino-acid sequence, 265 residues long: Phosphonates import ATP-binding protein PhnC 1 (265 aa).

The ABC transporter domain occupies 3 to 247 (LRLSAIDLRH…HLDTLYANEQ (245 aa)). 36-43 (GPSGAGKT) serves as a coordination point for ATP.

Belongs to the ABC transporter superfamily. Phosphonates importer (TC 3.A.1.9.1) family. As to quaternary structure, the complex is composed of two ATP-binding proteins (PhnC), two transmembrane proteins (PhnE) and a solute-binding protein (PhnD).

The protein resides in the cell inner membrane. The enzyme catalyses phosphonate(out) + ATP + H2O = phosphonate(in) + ADP + phosphate + H(+). Its function is as follows. Part of the ABC transporter complex PhnCDE involved in phosphonates import. Responsible for energy coupling to the transport system. This chain is Phosphonates import ATP-binding protein PhnC 1, found in Pseudomonas syringae pv. tomato (strain ATCC BAA-871 / DC3000).